The primary structure comprises 147 residues: Lysozyme C-3 (147 aa).

The first 18 residues, 1–18 (MKALVILGLLFLSVAVQG), serve as a signal peptide directing secretion. The C-type lysozyme domain occupies 19-147 (KVFERCELAR…VSSYVEGCKL (129 aa)). Disulfide bonds link Cys24–Cys145, Cys48–Cys133, Cys83–Cys99, and Cys95–Cys113. Residues Glu53 and Asp71 contribute to the active site.

It belongs to the glycosyl hydrolase 22 family. In terms of assembly, monomer. As to expression, expressed in stomach.

It localises to the secreted. It catalyses the reaction Hydrolysis of (1-&gt;4)-beta-linkages between N-acetylmuramic acid and N-acetyl-D-glucosamine residues in a peptidoglycan and between N-acetyl-D-glucosamine residues in chitodextrins.. Functionally, lysozymes have primarily a bacteriolytic function; those in tissues and body fluids are associated with the monocyte-macrophage system and enhance the activity of immunoagents. The polypeptide is Lysozyme C-3 (Ovis aries (Sheep)).